We begin with the raw amino-acid sequence, 240 residues long: Orotidine 5'-phosphate decarboxylase (240 aa).

Residues aspartate 15, lysine 37, 64 to 73 (DLKYHDIPNT), threonine 127, arginine 188, glutamine 197, glycine 217, and arginine 218 contribute to the substrate site. Residue lysine 66 is the Proton donor of the active site.

This sequence belongs to the OMP decarboxylase family. Type 1 subfamily. As to quaternary structure, homodimer.

The catalysed reaction is orotidine 5'-phosphate + H(+) = UMP + CO2. The protein operates within pyrimidine metabolism; UMP biosynthesis via de novo pathway; UMP from orotate: step 2/2. Catalyzes the decarboxylation of orotidine 5'-monophosphate (OMP) to uridine 5'-monophosphate (UMP). The polypeptide is Orotidine 5'-phosphate decarboxylase (Citrifermentans bemidjiense (strain ATCC BAA-1014 / DSM 16622 / JCM 12645 / Bem) (Geobacter bemidjiensis)).